We begin with the raw amino-acid sequence, 209 residues long: Uracil phosphoribosyltransferase (209 aa).

5-phospho-alpha-D-ribose 1-diphosphate-binding positions include R79, R104, and 131–139 (DPMLATGGS). Uracil is bound by residues I194 and 199–201 (GDA). D200 contributes to the 5-phospho-alpha-D-ribose 1-diphosphate binding site.

It belongs to the UPRTase family. The cofactor is Mg(2+).

The catalysed reaction is UMP + diphosphate = 5-phospho-alpha-D-ribose 1-diphosphate + uracil. The protein operates within pyrimidine metabolism; UMP biosynthesis via salvage pathway; UMP from uracil: step 1/1. Its activity is regulated as follows. Allosterically activated by GTP. Functionally, catalyzes the conversion of uracil and 5-phospho-alpha-D-ribose 1-diphosphate (PRPP) to UMP and diphosphate. The protein is Uracil phosphoribosyltransferase of Oceanobacillus iheyensis (strain DSM 14371 / CIP 107618 / JCM 11309 / KCTC 3954 / HTE831).